The sequence spans 340 residues: Sesquiterpene synthase 6 (340 aa).

4 residues coordinate Mg(2+): Asp90, Asn229, Ser233, and Glu237. The short motif at 90-94 (DDITD) is the DDXXD motif element. Positions 229-237 (NDIYSFNNE) match the NSE/DTE motif motif. The (2E,6E)-farnesyl diphosphate site is built by Arg316 and Tyr317.

The protein belongs to the terpene synthase family. The cofactor is Mg(2+).

The enzyme catalyses (2E,6E)-farnesyl diphosphate = delta-cadinene + diphosphate. It catalyses the reaction (2E,6E)-farnesyl diphosphate = bicyclogermacrene + diphosphate. Terpene cyclase that catalyzes the cyclization of farnesyl diphosphate (FPP) to various sesquiterpenes, including bicycloelemene, alpha-gurjunene, 9-epi-caryophylene, bicyclosesquiphellandrene, bicyclogermacrene and delta-cadinene. In Postia placenta (strain ATCC 44394 / Madison 698-R) (Brown rot fungus), this protein is Sesquiterpene synthase 6.